The sequence spans 89 residues: UPF0297 protein lp_2275 (89 aa).

This sequence belongs to the UPF0297 family.

This chain is UPF0297 protein lp_2275, found in Lactiplantibacillus plantarum (strain ATCC BAA-793 / NCIMB 8826 / WCFS1) (Lactobacillus plantarum).